We begin with the raw amino-acid sequence, 273 residues long: uncharacterized protein (273 aa).

This is an uncharacterized protein from Methanocaldococcus jannaschii (strain ATCC 43067 / DSM 2661 / JAL-1 / JCM 10045 / NBRC 100440) (Methanococcus jannaschii).